We begin with the raw amino-acid sequence, 396 residues long: Phosphoglycerate kinase (396 aa).

Substrate-binding positions include 21 to 23 (DFN), Arg-36, 59 to 62 (HLGK), Arg-119, and Arg-156. ATP is bound by residues Lys-206, Gly-294, Glu-325, and 352–355 (GGDS).

It belongs to the phosphoglycerate kinase family. As to quaternary structure, monomer.

Its subcellular location is the cytoplasm. It carries out the reaction (2R)-3-phosphoglycerate + ATP = (2R)-3-phospho-glyceroyl phosphate + ADP. It participates in carbohydrate degradation; glycolysis; pyruvate from D-glyceraldehyde 3-phosphate: step 2/5. The protein is Phosphoglycerate kinase of Staphylococcus aureus (strain bovine RF122 / ET3-1).